Here is a 351-residue protein sequence, read N- to C-terminus: MKNSNKLIASVVTLASVMALAACQSTNDNTKVISMKGDTISVSDFYNETKNTEVSQKAMLNLVISRVFEAQYGDKVSKKEVEKAYHKTAEQYGASFSAALAQSSLTPETFKRQIRSSKLVEYAVKEAAKKELTTQEYKKAYESYTPTMAVEMITLDNEETAKSVLEELKAEGADFTAIAKEKTTTPEKKVTYKFDSGATNVPTDVVKAASSLNEGGISDVISVLDPTSYQKKFYIVKVTKKAEKKSDWQEYKKRLKAIIIAEKSKDMNFQNKVIANALDKANVKIKDKAFANILAQYANLGQKTKAASESSTTSESSKAAEENPSESEQTQTSSAEEPTETEAQTQEPAAQ.

A signal peptide spans 1–22; the sequence is MKNSNKLIASVVTLASVMALAA. A lipid anchor (N-palmitoyl cysteine) is attached at C23. A lipid anchor (S-diacylglycerol cysteine) is attached at C23. The PpiC domain occupies 145–240; it reads TPTMAVEMIT…KKFYIVKVTK (96 aa). Low complexity-rich tracts occupy residues 303–317 and 326–351; these read KTKA…SESS and ESEQ…PAAQ. The segment at 303-351 is disordered; the sequence is KTKAASESSTTSESSKAAEENPSESEQTQTSSAEEPTETEAQTQEPAAQ.

The protein belongs to the PrsA family.

The protein resides in the cell membrane. It catalyses the reaction [protein]-peptidylproline (omega=180) = [protein]-peptidylproline (omega=0). Plays a major role in protein secretion by helping the post-translocational extracellular folding of several secreted proteins. In Streptococcus pyogenes serotype M1, this protein is Foldase protein PrsA 1 (prsA1).